Consider the following 327-residue polypeptide: Inactive peptidyl-prolyl cis-trans isomerase FKBP6 (327 aa).

The disordered stretch occupies residues 1–20 (MSVFSRLRNGIPPSRDDCQS). The 90-residue stretch at 54 to 143 (DASVLVKYSG…LFEIELIDFL (90 aa)) folds into the PPIase FKBP-type domain. TPR repeat units follow at residues 171–204 (AATEREFGNYLFRQNRFCDAKVRYKRALLLLHRR), 219–252 (LLVLLNLSFVYLKLDRPAMALRYGEQALLIDKRN), and 253–286 (AKALFRCGQACLLLTEYEQARDFLVRAQKEQPCN).

The protein belongs to the FKBP6 family. Interacts with HSP72/HSPA2 and CLTC. Interacts with GAPDH; leading to inhibit GAPDH catalytic activity. Interacts (via TPR repeats) with HSP90.

It is found in the cytoplasm. Its subcellular location is the cytosol. The protein localises to the nucleus. The protein resides in the chromosome. Co-chaperone required during spermatogenesis to repress transposable elements and prevent their mobilization, which is essential for the germline integrity. Acts via the piRNA metabolic process, which mediates the repression of transposable elements during meiosis by forming complexes composed of piRNAs and Piwi proteins and govern the methylation and subsequent repression of transposons. Acts as a co-chaperone via its interaction with HSP90 and is required for the piRNA amplification process, the secondary piRNA biogenesis. May be required together with HSP90 in removal of 16 nucleotide ping-pong by-products from Piwi complexes, possibly facilitating turnover of Piwi complexes. The chain is Inactive peptidyl-prolyl cis-trans isomerase FKBP6 (Fkbp6) from Rattus norvegicus (Rat).